Here is a 346-residue protein sequence, read N- to C-terminus: Phosphoribosylformylglycinamidine cyclo-ligase (346 aa).

Belongs to the AIR synthase family.

Its subcellular location is the cytoplasm. It catalyses the reaction 2-formamido-N(1)-(5-O-phospho-beta-D-ribosyl)acetamidine + ATP = 5-amino-1-(5-phospho-beta-D-ribosyl)imidazole + ADP + phosphate + H(+). Its pathway is purine metabolism; IMP biosynthesis via de novo pathway; 5-amino-1-(5-phospho-D-ribosyl)imidazole from N(2)-formyl-N(1)-(5-phospho-D-ribosyl)glycinamide: step 2/2. In Vibrio atlanticus (strain LGP32) (Vibrio splendidus (strain Mel32)), this protein is Phosphoribosylformylglycinamidine cyclo-ligase.